We begin with the raw amino-acid sequence, 494 residues long: Trigger factor (494 aa).

The 86-residue stretch at 169 to 254 (GDRITMDYVG…VKEVAAPADV (86 aa)) folds into the PPIase FKBP-type domain. The tract at residues 441–494 (LAEEEGEAKAETKKAAPKKKAAAKAEAADAGEGEEAAPKKKAAPKKKAADESAE) is disordered.

This sequence belongs to the FKBP-type PPIase family. Tig subfamily.

The protein resides in the cytoplasm. The catalysed reaction is [protein]-peptidylproline (omega=180) = [protein]-peptidylproline (omega=0). Involved in protein export. Acts as a chaperone by maintaining the newly synthesized protein in an open conformation. Functions as a peptidyl-prolyl cis-trans isomerase. The protein is Trigger factor of Rhizobium johnstonii (strain DSM 114642 / LMG 32736 / 3841) (Rhizobium leguminosarum bv. viciae).